Here is a 311-residue protein sequence, read N- to C-terminus: MKWSEISIHTTHEAVEPISNILHEAGASGVVIEDPLDLMKERENVYGEIYQLDPNDYPDEGVIVKAYLPINSFLGETVDGIKETINNLLLYDIDLGRNTITISEVNEEEWATAWKKYYHPVKISEKFTIVPTWETYTPVHTDELIIEMDPGMAFGTGTHPTTVLCIQALERIVQKGDRVIDVGTGSGILSIAAAMLEAESVHAYDLDPVAVESARLNVKLNKVSDTAEVKQNNLLDGITGEHDVIVANILAEVILRFTSQAYDLLKDGGHFITSGIIGQKKQEVKEALEKAGFTIIEILSMEDWVSIIAKK.

Positions 162, 183, 205, and 248 each coordinate S-adenosyl-L-methionine.

This sequence belongs to the methyltransferase superfamily. PrmA family.

It localises to the cytoplasm. The enzyme catalyses L-lysyl-[protein] + 3 S-adenosyl-L-methionine = N(6),N(6),N(6)-trimethyl-L-lysyl-[protein] + 3 S-adenosyl-L-homocysteine + 3 H(+). Functionally, methylates ribosomal protein L11. This chain is Ribosomal protein L11 methyltransferase, found in Bacillus velezensis (strain DSM 23117 / BGSC 10A6 / LMG 26770 / FZB42) (Bacillus amyloliquefaciens subsp. plantarum).